Reading from the N-terminus, the 189-residue chain is Protein CURLY FLAG LEAF 1 (189 aa).

The EAR motif lies at Thr-50–Ser-55. Residues Leu-57–Lys-91 enclose the WW domain. Positions Arg-90–Asp-148 are disordered. Acidic residues-rich tracts occupy residues Ser-108 to Ser-121 and Glu-135 to Asp-148.

Interacts with BHLH122/CFLAP1 and BHLH80/CFLAP2. Binds to HDG1. Mostly observed in roots, flowers and siliques. Expressed in cells differentiated from epidermal cells such as trichomes, stigmatic papillar cells and guard cells, as well as in tissues undergoing abscission and dehiscence.

Functionally, negatively regulates the cuticle development by interacting with the HD-ZIP IV transcription factor HDG1. The sequence is that of Protein CURLY FLAG LEAF 1 from Arabidopsis thaliana (Mouse-ear cress).